The following is a 379-amino-acid chain: Transcription factor bHLH122 (379 aa).

Basic and acidic residues predominate over residues 1-17; sequence MESEFQQHHFLLHDHQH. Positions 1–21 are disordered; it reads MESEFQQHHFLLHDHQHQRPR. Serine 74 carries the phosphoserine modification. Disordered stretches follow at residues 79–98, 133–156, and 190–286; these read TFNSDGTEKKPPEVKTEDED, SVSRNKRPREKDDRTPVNNLARHN, and TSNT…MSLP. A compositionally biased stretch (basic and acidic residues) spans 84-93; that stretch reads GTEKKPPEVK. Residues 190-200 are compositionally biased toward polar residues; the sequence is TSNTEASSLTP. Residues serine 213 and serine 234 each carry the phosphoserine modification. The span at 235–261 shows a compositional bias: polar residues; sequence GGFNRSFGNEGSASSKLTALARTQSGG. A compositionally biased stretch (basic and acidic residues) spans 265–274; the sequence is YKTKDEDSAS. The bHLH domain maps to 310–360; that stretch reads CATHPRSIAERVRRTKISERMRKLQDLVPNMDTQTNTADMLDLAVQYIKDL.

As to quaternary structure, homodimer.

It localises to the nucleus. This is Transcription factor bHLH122 (BHLH122) from Arabidopsis thaliana (Mouse-ear cress).